The sequence spans 191 residues: Ion-translocating oxidoreductase complex subunit B (191 aa).

A hydrophobic region spans residues Met-1 to Ser-26. Residues Glu-32–Val-91 enclose the 4Fe-4S domain. The [4Fe-4S] cluster site is built by Cys-49, Cys-52, Cys-57, Cys-74, Cys-116, Cys-119, Cys-122, Cys-126, Cys-146, Cys-149, Cys-152, and Cys-156. 4Fe-4S ferredoxin-type domains follow at residues Lys-107–Arg-136 and Ala-137–Val-166.

This sequence belongs to the 4Fe4S bacterial-type ferredoxin family. RnfB subfamily. As to quaternary structure, the complex is composed of six subunits: RnfA, RnfB, RnfC, RnfD, RnfE and RnfG. It depends on [4Fe-4S] cluster as a cofactor.

It is found in the cell inner membrane. In terms of biological role, part of a membrane-bound complex that couples electron transfer with translocation of ions across the membrane. The protein is Ion-translocating oxidoreductase complex subunit B of Erwinia tasmaniensis (strain DSM 17950 / CFBP 7177 / CIP 109463 / NCPPB 4357 / Et1/99).